The following is a 264-amino-acid chain: Indole-3-glycerol phosphate synthase (264 aa).

The protein belongs to the TrpC family.

The catalysed reaction is 1-(2-carboxyphenylamino)-1-deoxy-D-ribulose 5-phosphate + H(+) = (1S,2R)-1-C-(indol-3-yl)glycerol 3-phosphate + CO2 + H2O. The protein operates within amino-acid biosynthesis; L-tryptophan biosynthesis; L-tryptophan from chorismate: step 4/5. The chain is Indole-3-glycerol phosphate synthase from Xylella fastidiosa (strain 9a5c).